We begin with the raw amino-acid sequence, 145 residues long: Putative pre-16S rRNA nuclease (145 aa).

The protein belongs to the YqgF nuclease family.

The protein resides in the cytoplasm. Its function is as follows. Could be a nuclease involved in processing of the 5'-end of pre-16S rRNA. The chain is Putative pre-16S rRNA nuclease from Pseudomonas fluorescens (strain Pf0-1).